The primary structure comprises 406 residues: Cysteine--tRNA ligase (406 aa).

C16 serves as a coordination point for Zn(2+). Residues 18–28 (PTVYSDVHIGN) carry the 'HIGH' region motif. Positions 192, 218, and 222 each coordinate Zn(2+). A 'KMSKS' region motif is present at residues 250–254 (KMAKS). K253 is a binding site for ATP.

The protein belongs to the class-I aminoacyl-tRNA synthetase family. Monomer. Zn(2+) serves as cofactor.

It localises to the cytoplasm. It carries out the reaction tRNA(Cys) + L-cysteine + ATP = L-cysteinyl-tRNA(Cys) + AMP + diphosphate. This Mesomycoplasma hyopneumoniae (strain J / ATCC 25934 / NCTC 10110) (Mycoplasma hyopneumoniae) protein is Cysteine--tRNA ligase.